A 314-amino-acid chain; its full sequence is 4-hydroxy-3-methylbut-2-enyl diphosphate reductase (314 aa).

Cys-12 provides a ligand contact to [4Fe-4S] cluster. Residues His-43 and His-81 each coordinate (2E)-4-hydroxy-3-methylbut-2-enyl diphosphate. 2 residues coordinate dimethylallyl diphosphate: His-43 and His-81. 2 residues coordinate isopentenyl diphosphate: His-43 and His-81. Cys-103 lines the [4Fe-4S] cluster pocket. Position 131 (His-131) interacts with (2E)-4-hydroxy-3-methylbut-2-enyl diphosphate. His-131 provides a ligand contact to dimethylallyl diphosphate. Position 131 (His-131) interacts with isopentenyl diphosphate. Glu-133 (proton donor) is an active-site residue. Thr-170 serves as a coordination point for (2E)-4-hydroxy-3-methylbut-2-enyl diphosphate. Residue Cys-198 coordinates [4Fe-4S] cluster. Residues Ser-226, Asn-228, and Ser-271 each coordinate (2E)-4-hydroxy-3-methylbut-2-enyl diphosphate. Dimethylallyl diphosphate is bound by residues Ser-226, Asn-228, and Ser-271. Isopentenyl diphosphate-binding residues include Ser-226, Asn-228, and Ser-271.

Belongs to the IspH family. The cofactor is [4Fe-4S] cluster.

It carries out the reaction isopentenyl diphosphate + 2 oxidized [2Fe-2S]-[ferredoxin] + H2O = (2E)-4-hydroxy-3-methylbut-2-enyl diphosphate + 2 reduced [2Fe-2S]-[ferredoxin] + 2 H(+). The catalysed reaction is dimethylallyl diphosphate + 2 oxidized [2Fe-2S]-[ferredoxin] + H2O = (2E)-4-hydroxy-3-methylbut-2-enyl diphosphate + 2 reduced [2Fe-2S]-[ferredoxin] + 2 H(+). Its pathway is isoprenoid biosynthesis; dimethylallyl diphosphate biosynthesis; dimethylallyl diphosphate from (2E)-4-hydroxy-3-methylbutenyl diphosphate: step 1/1. It participates in isoprenoid biosynthesis; isopentenyl diphosphate biosynthesis via DXP pathway; isopentenyl diphosphate from 1-deoxy-D-xylulose 5-phosphate: step 6/6. Functionally, catalyzes the conversion of 1-hydroxy-2-methyl-2-(E)-butenyl 4-diphosphate (HMBPP) into a mixture of isopentenyl diphosphate (IPP) and dimethylallyl diphosphate (DMAPP). Acts in the terminal step of the DOXP/MEP pathway for isoprenoid precursor biosynthesis. The chain is 4-hydroxy-3-methylbut-2-enyl diphosphate reductase from Bacillus velezensis (strain DSM 23117 / BGSC 10A6 / LMG 26770 / FZB42) (Bacillus amyloliquefaciens subsp. plantarum).